We begin with the raw amino-acid sequence, 188 residues long: Ribose 1,5-bisphosphate phosphokinase PhnN (188 aa).

9 to 16 (GPSGAGKD) contributes to the ATP binding site.

It belongs to the ribose 1,5-bisphosphokinase family.

The catalysed reaction is alpha-D-ribose 1,5-bisphosphate + ATP = 5-phospho-alpha-D-ribose 1-diphosphate + ADP. It participates in metabolic intermediate biosynthesis; 5-phospho-alpha-D-ribose 1-diphosphate biosynthesis; 5-phospho-alpha-D-ribose 1-diphosphate from D-ribose 5-phosphate (route II): step 3/3. In terms of biological role, catalyzes the phosphorylation of ribose 1,5-bisphosphate to 5-phospho-D-ribosyl alpha-1-diphosphate (PRPP). The polypeptide is Ribose 1,5-bisphosphate phosphokinase PhnN (Pectobacterium parmentieri (strain WPP163) (Pectobacterium wasabiae (strain WPP163))).